The chain runs to 442 residues: Alpha-1,6-mannosyl-glycoprotein 2-beta-N-acetylglucosaminyltransferase (442 aa).

Over 1-9 (MRFRIYKRK) the chain is Cytoplasmic. The chain crosses the membrane as a helical; Signal-anchor for type II membrane protein span at residues 10 to 29 (VLILTLVVAACGFVLWSSNG). Residues 30–442 (RQRKNDALAP…ELCKSYRRLQ (413 aa)) lie on the Lumenal side of the membrane. Residues Asn-64 and Asn-81 are each glycosylated (N-linked (GlcNAc...) asparagine). Residues 118-122 (QVHNR) and Asp-149 contribute to the substrate site. Cys-191 and Cys-205 are oxidised to a cystine. Position 224-228 (224-228 (QTKHH)) interacts with substrate. Asp-256 lines the Mn(2+) pocket. The cysteines at positions 278 and 281 are disulfide-linked. Residue Arg-293 participates in substrate binding. Intrachain disulfides connect Cys-329–Cys-352, Cys-334–Cys-435, and Cys-373–Cys-381. His-369 contributes to the Mn(2+) binding site.

It belongs to the glycosyltransferase 16 (GT16) protein family. As to quaternary structure, homodimer. Mn(2+) serves as cofactor. In terms of tissue distribution, detected in liver (at protein level). Detected in liver, brain, thymus and spleen.

The protein resides in the golgi apparatus membrane. It carries out the reaction an N(4)-{beta-D-GlcNAc-(1-&gt;2)-alpha-D-Man-(1-&gt;3)-[alpha-D-Man-(1-&gt;6)]-beta-D-Man-(1-&gt;4)-beta-D-GlcNAc-(1-&gt;4)-beta-D-GlcNAc}-L-asparaginyl-[protein] + UDP-N-acetyl-alpha-D-glucosamine = N(4)-{beta-D-GlcNAc-(1-&gt;2)-alpha-D-Man-(1-&gt;3)-[beta-D-GlcNAc-(1-&gt;2)-alpha-D-Man-(1-&gt;6)]-beta-D-Man-(1-&gt;4)-beta-D-GlcNAc-(1-&gt;4)-beta-D-GlcNAc}-L-asparaginyl-[protein] + UDP + H(+). It functions in the pathway protein modification; protein glycosylation. In terms of biological role, plays an essential role in protein N-glycosylation. Catalyzes the transfer of N-acetylglucosamine (GlcNAc) onto the free terminal mannose moiety in the core structure of the nascent N-linked glycan chain, giving rise to the second branch in complex glycans. The polypeptide is Alpha-1,6-mannosyl-glycoprotein 2-beta-N-acetylglucosaminyltransferase (Mgat2) (Rattus norvegicus (Rat)).